We begin with the raw amino-acid sequence, 353 residues long: Photosystem II protein D1 (353 aa).

Thr-2 bears the N-acetylthreonine mark. Thr-2 carries the post-translational modification Phosphothreonine. 3 consecutive transmembrane segments (helical) span residues 29–46, 118–133, and 142–156; these read YIGW…TAIS, HFLL…EWEL, and WIAV…AATA. Residue His-118 coordinates chlorophyll a. Tyr-126 is a binding site for pheophytin a. Residues Asp-170 and Glu-189 each contribute to the [CaMn4O5] cluster site. Residues 197 to 218 traverse the membrane as a helical segment; it reads FHMLGVAGVFGGSLFSAMHGSL. Chlorophyll a is bound at residue His-198. Residues His-215 and 264 to 265 each bind a quinone; that span reads SF. Position 215 (His-215) interacts with Fe cation. Residue His-272 participates in Fe cation binding. Residues 274–288 traverse the membrane as a helical segment; the sequence is FLAVWPVVGIWFTAM. His-332, Glu-333, Asp-342, and Ala-344 together coordinate [CaMn4O5] cluster. Positions 345–353 are excised as a propeptide; sequence SVEAPAVNG.

The protein belongs to the reaction center PufL/M/PsbA/D family. In terms of assembly, PSII is composed of 1 copy each of membrane proteins PsbA, PsbB, PsbC, PsbD, PsbE, PsbF, PsbH, PsbI, PsbJ, PsbK, PsbL, PsbM, PsbT, PsbX, PsbY, PsbZ, Psb30/Ycf12, at least 3 peripheral proteins of the oxygen-evolving complex and a large number of cofactors. It forms dimeric complexes. The D1/D2 heterodimer binds P680, chlorophylls that are the primary electron donor of PSII, and subsequent electron acceptors. It shares a non-heme iron and each subunit binds pheophytin, quinone, additional chlorophylls, carotenoids and lipids. D1 provides most of the ligands for the Mn4-Ca-O5 cluster of the oxygen-evolving complex (OEC). There is also a Cl(-1) ion associated with D1 and D2, which is required for oxygen evolution. The PSII complex binds additional chlorophylls, carotenoids and specific lipids. serves as cofactor. In terms of processing, tyr-161 forms a radical intermediate that is referred to as redox-active TyrZ, YZ or Y-Z. Post-translationally, C-terminally processed by CTPA; processing is essential to allow assembly of the oxygen-evolving complex and thus photosynthetic growth.

The protein resides in the plastid. Its subcellular location is the chloroplast thylakoid membrane. The enzyme catalyses 2 a plastoquinone + 4 hnu + 2 H2O = 2 a plastoquinol + O2. Its function is as follows. Photosystem II (PSII) is a light-driven water:plastoquinone oxidoreductase that uses light energy to abstract electrons from H(2)O, generating O(2) and a proton gradient subsequently used for ATP formation. It consists of a core antenna complex that captures photons, and an electron transfer chain that converts photonic excitation into a charge separation. The D1/D2 (PsbA/PsbD) reaction center heterodimer binds P680, the primary electron donor of PSII as well as several subsequent electron acceptors. The sequence is that of Photosystem II protein D1 from Mesostigma viride (Green alga).